The primary structure comprises 218 residues: Probable GTP-binding protein EngB (218 aa).

One can recognise an EngB-type G domain in the interval 23–200 (EVPEIAFVGR…AQLLWQWAHP (178 aa)). GTP contacts are provided by residues 31–38 (GRSNAGKS), 58–62 (GRTQH), 80–83 (DLPG), 150–153 (TKAD), and 179–181 (FSA). The Mg(2+) site is built by S38 and T60.

It belongs to the TRAFAC class TrmE-Era-EngA-EngB-Septin-like GTPase superfamily. EngB GTPase family. It depends on Mg(2+) as a cofactor.

In terms of biological role, necessary for normal cell division and for the maintenance of normal septation. This Acidovorax ebreus (strain TPSY) (Diaphorobacter sp. (strain TPSY)) protein is Probable GTP-binding protein EngB.